The following is a 1097-amino-acid chain: U3 small nucleolar RNA-associated protein 22 (1097 aa).

Composition is skewed to basic and acidic residues over residues 1-10 (MNGLKREHES) and 18-27 (KTPETEYDSH). The segment at 1–27 (MNGLKREHESSSSQDGSKTPETEYDSH) is disordered.

This sequence belongs to the NRAP family. As to quaternary structure, component of the ribosomal small subunit (SSU) processome.

It is found in the nucleus. Its subcellular location is the nucleolus. In terms of biological role, involved in nucleolar processing of pre-18S ribosomal RNA and ribosome assembly. This Schizosaccharomyces pombe (strain 972 / ATCC 24843) (Fission yeast) protein is U3 small nucleolar RNA-associated protein 22.